Reading from the N-terminus, the 147-residue chain is Hemoglobin subunit beta (147 aa).

The 145-residue stretch at 3–147 (LLSAEENAHV…VANALAHKYH (145 aa)) folds into the Globin domain. The residue at position 13 (Thr13) is a Phosphothreonine. Ser45 carries the phosphoserine modification. At Lys60 the chain carries N6-acetyllysine. Residue His64 participates in heme b binding. Lys83 bears the N6-acetyllysine mark. His93 contacts heme b. Cys94 bears the S-nitrosocysteine mark. Residue Lys145 is modified to N6-acetyllysine.

It belongs to the globin family. Heterotetramer of two alpha chains and two beta chains. As to expression, red blood cells.

Involved in oxygen transport from the lung to the various peripheral tissues. The chain is Hemoglobin subunit beta (HBB) from Eulemur fulvus fulvus (Brown lemur).